We begin with the raw amino-acid sequence, 425 residues long: MALIDAIHAREILDSRGNPTVEVEVLLTDGSLGRAAVPSGASTGEFEAVERRDGDKKRYGGKGVLDAVAAVEGIAEELEGEFAADQRAVDRAMRDLDGTPNKGKLGANAILGVSMAVAVAAAQASDLMLYKYLGGPNSHVLPVPMMNILNGGAHADSNVDIQEFMIAPIGAPSFREALRWGTEVYHALKTVLQEKGLSTGLGDEGGFAPSLESNRAALDLIAEAVTKAGYRLGEDIALALDVASSEFFDKGSYTFEGQQRSAEEMAAYYTELVDNYPIVSIEDPLDEDDWEGWQHLTAQLGDRVQLVGDDLFVTNVERLQRGIDEKAGNALLVKVNQIGSLTETFDAISLAQRHMFHCMISHRSGETEDTFIADLAVATNAGQIKTGAPARSDRVAKYNQLLRIEEDLADAAVYAGRSAFPRFRG.

Gln162 is a (2R)-2-phosphoglycerate binding site. The Proton donor role is filled by Glu204. Residues Asp241, Glu282, and Asp309 each coordinate Mg(2+). 4 residues coordinate (2R)-2-phosphoglycerate: Lys334, Arg363, Ser364, and Lys385. Lys334 serves as the catalytic Proton acceptor.

Belongs to the enolase family. Requires Mg(2+) as cofactor.

The protein resides in the cytoplasm. It localises to the secreted. Its subcellular location is the cell surface. It carries out the reaction (2R)-2-phosphoglycerate = phosphoenolpyruvate + H2O. The protein operates within carbohydrate degradation; glycolysis; pyruvate from D-glyceraldehyde 3-phosphate: step 4/5. Catalyzes the reversible conversion of 2-phosphoglycerate (2-PG) into phosphoenolpyruvate (PEP). It is essential for the degradation of carbohydrates via glycolysis. The chain is Enolase from Micrococcus luteus (strain ATCC 4698 / DSM 20030 / JCM 1464 / CCM 169 / CCUG 5858 / IAM 1056 / NBRC 3333 / NCIMB 9278 / NCTC 2665 / VKM Ac-2230) (Micrococcus lysodeikticus).